The chain runs to 264 residues: Glutamate racemase (264 aa).

Residues 10–11 (DS) and 42–43 (YG) each bind substrate. Cys73 serves as the catalytic Proton donor/acceptor. 74 to 75 (NT) provides a ligand contact to substrate. Cys183 serves as the catalytic Proton donor/acceptor. 184–185 (TH) provides a ligand contact to substrate.

Belongs to the aspartate/glutamate racemases family.

It carries out the reaction L-glutamate = D-glutamate. It functions in the pathway cell wall biogenesis; peptidoglycan biosynthesis. Functionally, provides the (R)-glutamate required for cell wall biosynthesis. The protein is Glutamate racemase of Streptococcus agalactiae serotype Ia (strain ATCC 27591 / A909 / CDC SS700).